The primary structure comprises 336 residues: Dihydroorotate dehydrogenase (quinone) (336 aa).

Residues 62 to 66 (AGLDK) and Thr86 each bind FMN. A substrate-binding site is contributed by Lys66. 111-115 (NRMGF) contacts substrate. FMN contacts are provided by Asn139 and Asn172. Residue Asn172 participates in substrate binding. The active-site Nucleophile is the Ser175. Substrate is bound at residue Asn177. FMN is bound by residues Lys217 and Thr245. Position 246–247 (246–247 (NT)) interacts with substrate. FMN contacts are provided by residues Gly268, Gly297, and 318-319 (YS).

Belongs to the dihydroorotate dehydrogenase family. Type 2 subfamily. In terms of assembly, monomer. It depends on FMN as a cofactor.

The protein localises to the cell membrane. The enzyme catalyses (S)-dihydroorotate + a quinone = orotate + a quinol. It participates in pyrimidine metabolism; UMP biosynthesis via de novo pathway; orotate from (S)-dihydroorotate (quinone route): step 1/1. Catalyzes the conversion of dihydroorotate to orotate with quinone as electron acceptor. This Salmonella choleraesuis (strain SC-B67) protein is Dihydroorotate dehydrogenase (quinone).